The primary structure comprises 284 residues: Shikimate dehydrogenase (NADP(+)) (284 aa).

Residues 20–22 (SIS) and Ser-67 each bind shikimate. Catalysis depends on Lys-71, which acts as the Proton acceptor. Asp-83 provides a ligand contact to NADP(+). Residues Asn-92 and Asp-107 each contribute to the shikimate site. Residues 129–133 (GAGGA) and Ile-227 contribute to the NADP(+) site. Shikimate is bound at residue Tyr-229. NADP(+) is bound at residue Gly-250.

This sequence belongs to the shikimate dehydrogenase family. In terms of assembly, homodimer.

The catalysed reaction is shikimate + NADP(+) = 3-dehydroshikimate + NADPH + H(+). Its pathway is metabolic intermediate biosynthesis; chorismate biosynthesis; chorismate from D-erythrose 4-phosphate and phosphoenolpyruvate: step 4/7. Functionally, involved in the biosynthesis of the chorismate, which leads to the biosynthesis of aromatic amino acids. Catalyzes the reversible NADPH linked reduction of 3-dehydroshikimate (DHSA) to yield shikimate (SA). The sequence is that of Shikimate dehydrogenase (NADP(+)) from Streptococcus pneumoniae (strain ATCC 700669 / Spain 23F-1).